We begin with the raw amino-acid sequence, 229 residues long: Heptaprenylglyceryl phosphate synthase (229 aa).

Lys-12 is a sn-glycerol 1-phosphate binding site. Positions 14 and 40 each coordinate Mg(2+). Residues 159 to 164 (YLEYSG), Gly-189, and 209 to 210 (GN) contribute to the sn-glycerol 1-phosphate site.

Belongs to the GGGP/HepGP synthase family. Group I subfamily. In terms of assembly, homodimer. The cofactor is Mg(2+).

It carries out the reaction sn-glycerol 1-phosphate + all-trans-heptaprenyl diphosphate = 3-heptaprenyl-sn-glycero-1-phosphate + diphosphate. It participates in membrane lipid metabolism; glycerophospholipid metabolism. Prenyltransferase that catalyzes in vivo the transfer of the heptaprenyl moiety of heptaprenyl pyrophosphate (HepPP; 35 carbon atoms) to the C3 hydroxyl of sn-glycerol-1-phosphate (G1P), producing heptaprenylglyceryl phosphate (HepGP). This reaction is an ether-bond-formation step in the biosynthesis of archaea-type G1P-based membrane lipids found in Bacillales. This Bacillus cereus (strain ATCC 14579 / DSM 31 / CCUG 7414 / JCM 2152 / NBRC 15305 / NCIMB 9373 / NCTC 2599 / NRRL B-3711) protein is Heptaprenylglyceryl phosphate synthase.